A 401-amino-acid chain; its full sequence is Alkane 1-monooxygenase (401 aa).

The Cytoplasmic portion of the chain corresponds to methionine 1–tyrosine 20. The helical transmembrane segment at leucine 21–alanine 39 threads the bilayer. Topologically, residues asparagine 40–glutamate 41 are periplasmic. The helical transmembrane segment at threonine 42–leucine 62 threads the bilayer. At aspartate 63–arginine 88 the chain is on the cytoplasmic side. The helical transmembrane segment at valine 89–threonine 111 threads the bilayer. The Periplasmic segment spans residues glutamine 112–proline 113. The chain crosses the membrane as a helical span at residues methionine 114 to leucine 134. Over asparagine 135–isoleucine 228 the chain is Cytoplasmic. Positions 138, 142, 168, 172, and 173 each coordinate Fe cation. A helical membrane pass occupies residues leucine 229–lysine 249. Methionine 250 is a topological domain (periplasmic). The chain crosses the membrane as a helical span at residues leucine 251 to tyrosine 270. Residues isoleucine 271–serine 401 are Cytoplasmic-facing. Residues histidine 312, histidine 315, and histidine 316 each contribute to the Fe cation site.

This sequence belongs to the fatty acid desaturase type 1 family. AlkB subfamily. Requires Fe(3+) as cofactor.

It localises to the cell inner membrane. It catalyses the reaction octane + 2 reduced [rubredoxin] + O2 + 2 H(+) = 2 oxidized [rubredoxin] + octan-1-ol + H2O. The protein operates within hydrocarbon metabolism; alkane degradation. Catalyzes the hydroxylation of n-alkanes and fatty acids in the presence of a NADH-rubredoxin reductase and rubredoxin. This is Alkane 1-monooxygenase (alkB) from Ectopseudomonas oleovorans (Pseudomonas oleovorans).